Consider the following 143-residue polypeptide: Gastrin-releasing peptide (143 aa).

The signal sequence occupies residues 1-23 (MRGPELRLVLLALVLCQAPLGPA). Residue M50 is modified to Methionine amide. Residues 54–143 (STGESRHVLE…GLKAKEGALS (90 aa)) constitute a propeptide that is removed on maturation. The disordered stretch occupies residues 91-115 (KGNSSHRSPQLKPLSTHQPTLDTED). Residues 92–111 (GNSSHRSPQLKPLSTHQPTL) are compositionally biased toward polar residues.

The protein belongs to the bombesin/neuromedin-B/ranatensin family.

The protein resides in the secreted. It localises to the cytoplasmic vesicle. It is found in the secretory vesicle lumen. Its subcellular location is the cell projection. The protein localises to the neuron projection. Functionally, stimulates the release of gastrin and other gastrointestinal hormones. Contributes to the perception of prurient stimuli and to the transmission of itch signals in the spinal cord that promote scratching behavior. Contributes primarily to nonhistaminergic itch sensation. In one study, shown to act in the amygdala as part of an inhibitory network which inhibits memory specifically related to learned fear. In another study, shown to act on vasoactive intestinal peptide (VIP)-expressing cells in the auditory cortex, most likely via extrasynaptic diffusion from local and long-range sources, to mediate disinhibition of glutamatergic cells via VIP cell-specific GRPR signaling which leads to enhanced auditory fear memories. Contributes to the regulation of food intake. Inhibits voltage-gated sodium channels but enhances voltage-gated potassium channels in hippocampal neurons. Induces sighing by acting directly on the pre-Botzinger complex, a cluster of several thousand neurons in the ventrolateral medulla responsible for inspiration during respiratory activity. Induces an itch response through activation of receptors present on mast cells, triggering mast cell degranulation. The sequence is that of Gastrin-releasing peptide (GRP) from Cavia porcellus (Guinea pig).